Here is a 448-residue protein sequence, read N- to C-terminus: ATP-dependent protease ATPase subunit HslU (448 aa).

Residues Ile18, 60-65, Asp261, Glu326, and Arg398 contribute to the ATP site; that span reads GVGKTE.

The protein belongs to the ClpX chaperone family. HslU subfamily. As to quaternary structure, a double ring-shaped homohexamer of HslV is capped on each side by a ring-shaped HslU homohexamer. The assembly of the HslU/HslV complex is dependent on binding of ATP.

The protein localises to the cytoplasm. Its function is as follows. ATPase subunit of a proteasome-like degradation complex; this subunit has chaperone activity. The binding of ATP and its subsequent hydrolysis by HslU are essential for unfolding of protein substrates subsequently hydrolyzed by HslV. HslU recognizes the N-terminal part of its protein substrates and unfolds these before they are guided to HslV for hydrolysis. The chain is ATP-dependent protease ATPase subunit HslU from Paraburkholderia phytofirmans (strain DSM 17436 / LMG 22146 / PsJN) (Burkholderia phytofirmans).